The primary structure comprises 349 residues: MRVADFSFELPDSLIARHPLAERHGSRLLVLDGPTGALSHRQFPDLLDYLRPGDLMVFNNTRVIPARLFGQKASGGKLEVLVERVLDSHRVLAHVRASKAPKVGAVILIDGGGEAEMVARHDTLFELRFTEEVLPLLDRVGHMPLPPYIDRPDEGADRERYQTVYAQRAGAVAAPTAGLHFDEALLEKIAAKGVERAFVTLHVGAGTFQPVRVDKIEDHHMHKEWLEVGQDVVDAIEACRARGGRVVAVGTTSVRSLESAARDGVLKAFSGDTDIFIYPGRPFHVVDALVTNFHLPESTLLMLVSAFAGYPETMAAYAAAVEHGYRFFSYGDAMFITRNPAPRGPEDQA.

It belongs to the QueA family. In terms of assembly, monomer.

Its subcellular location is the cytoplasm. It catalyses the reaction 7-aminomethyl-7-carbaguanosine(34) in tRNA + S-adenosyl-L-methionine = epoxyqueuosine(34) in tRNA + adenine + L-methionine + 2 H(+). Its pathway is tRNA modification; tRNA-queuosine biosynthesis. Transfers and isomerizes the ribose moiety from AdoMet to the 7-aminomethyl group of 7-deazaguanine (preQ1-tRNA) to give epoxyqueuosine (oQ-tRNA). The sequence is that of S-adenosylmethionine:tRNA ribosyltransferase-isomerase from Pseudomonas putida (strain GB-1).